Reading from the N-terminus, the 62-residue chain is Photosystem II reaction center protein Z (62 aa).

A run of 2 helical transmembrane segments spans residues 8–28 (TLFA…VVFA) and 41–61 (LSGL…NSFV).

The protein belongs to the PsbZ family. As to quaternary structure, PSII is composed of 1 copy each of membrane proteins PsbA, PsbB, PsbC, PsbD, PsbE, PsbF, PsbH, PsbI, PsbJ, PsbK, PsbL, PsbM, PsbT, PsbY, PsbZ, Psb30/Ycf12, at least 3 peripheral proteins of the oxygen-evolving complex and a large number of cofactors. It forms dimeric complexes.

It is found in the plastid. Its subcellular location is the chloroplast thylakoid membrane. May control the interaction of photosystem II (PSII) cores with the light-harvesting antenna, regulates electron flow through the 2 photosystem reaction centers. PSII is a light-driven water plastoquinone oxidoreductase, using light energy to abstract electrons from H(2)O, generating a proton gradient subsequently used for ATP formation. This Stigeoclonium helveticum (Green alga) protein is Photosystem II reaction center protein Z.